The chain runs to 441 residues: Chromosome partition protein MukF (441 aa).

The leucine-zipper stretch occupies residues 208–236 (LDETSGNLRELQDTLNAAGDKLQAQLLRI).

The protein belongs to the MukF family. In terms of assembly, interacts, and probably forms a ternary complex, with MukE and MukB via its C-terminal region. The complex formation is stimulated by calcium or magnesium. It is required for an interaction between MukE and MukB.

It localises to the cytoplasm. Its subcellular location is the nucleoid. Its function is as follows. Involved in chromosome condensation, segregation and cell cycle progression. May participate in facilitating chromosome segregation by condensation DNA from both sides of a centrally located replisome during cell division. Not required for mini-F plasmid partitioning. Probably acts via its interaction with MukB and MukE. Overexpression results in anucleate cells. It has a calcium binding activity. This chain is Chromosome partition protein MukF, found in Pasteurella multocida (strain Pm70).